Reading from the N-terminus, the 245-residue chain is ATP synthase subunit b (245 aa).

A helical transmembrane segment spans residues 3–23 (SFNLLTIVSSIVNLLALAWII).

The protein belongs to the ATPase B chain family. F-type ATPases have 2 components, F(1) - the catalytic core - and F(0) - the membrane proton channel. F(1) has five subunits: alpha(3), beta(3), gamma(1), delta(1), epsilon(1). F(0) has three main subunits: a(1), b(2) and c(10-14). The alpha and beta chains form an alternating ring which encloses part of the gamma chain. F(1) is attached to F(0) by a central stalk formed by the gamma and epsilon chains, while a peripheral stalk is formed by the delta and b chains.

It localises to the cell inner membrane. F(1)F(0) ATP synthase produces ATP from ADP in the presence of a proton or sodium gradient. F-type ATPases consist of two structural domains, F(1) containing the extramembraneous catalytic core and F(0) containing the membrane proton channel, linked together by a central stalk and a peripheral stalk. During catalysis, ATP synthesis in the catalytic domain of F(1) is coupled via a rotary mechanism of the central stalk subunits to proton translocation. In terms of biological role, component of the F(0) channel, it forms part of the peripheral stalk, linking F(1) to F(0). The sequence is that of ATP synthase subunit b from Dictyoglomus thermophilum (strain ATCC 35947 / DSM 3960 / H-6-12).